A 278-amino-acid chain; its full sequence is Ribosomal RNA small subunit methyltransferase A (278 aa).

S-adenosyl-L-methionine is bound by residues asparagine 27, leucine 29, glycine 54, glutamate 75, aspartate 95, and asparagine 118.

The protein belongs to the class I-like SAM-binding methyltransferase superfamily. rRNA adenine N(6)-methyltransferase family. RsmA subfamily.

The protein localises to the cytoplasm. The catalysed reaction is adenosine(1518)/adenosine(1519) in 16S rRNA + 4 S-adenosyl-L-methionine = N(6)-dimethyladenosine(1518)/N(6)-dimethyladenosine(1519) in 16S rRNA + 4 S-adenosyl-L-homocysteine + 4 H(+). Specifically dimethylates two adjacent adenosines (A1518 and A1519) in the loop of a conserved hairpin near the 3'-end of 16S rRNA in the 30S particle. May play a critical role in biogenesis of 30S subunits. In Chlamydia caviae (strain ATCC VR-813 / DSM 19441 / 03DC25 / GPIC) (Chlamydophila caviae), this protein is Ribosomal RNA small subunit methyltransferase A.